The chain runs to 224 residues: Casparian strip membrane protein 1 (224 aa).

A disordered region spans residues 1–22; sequence MSSGEPAAVSIPIHDHHGKAPA. The Cytoplasmic portion of the chain corresponds to 1–62; sequence MSSGEPAAVS…RGDHHRGSRC (62 aa). A helical membrane pass occupies residues 63–83; that stretch reads LAFLDFILRIAAFGPALAAAI. Residues 84 to 110 are Extracellular-facing; it reads STGTSDETLSVFTEFYQFRARFDDFPA. The chain crosses the membrane as a helical span at residues 111 to 131; the sequence is FLFFLVANAIVAGYLVLSLPF. Topologically, residues 132 to 145 are cytoplasmic; sequence SAVLVIRPQTIGLR. The chain crosses the membrane as a helical span at residues 146–166; it reads LLLLVCDMIMAAMLTAAASAA. The Extracellular portion of the chain corresponds to 167–200; sequence AAIVDLAHNGNLRANWVAICMQFHGFCQRTSGSV. A helical membrane pass occupies residues 201–221; the sequence is VASFLTVVILMFLVILAACSI. At 222 to 224 the chain is on the cytoplasmic side; sequence RKR.

The protein belongs to the Casparian strip membrane proteins (CASP) family. Homodimer and heterodimers.

The protein resides in the cell membrane. Functionally, regulates membrane-cell wall junctions and localized cell wall deposition. Required for establishment of the Casparian strip membrane domain (CSD) and the subsequent formation of Casparian strips, a cell wall modification of the root endodermis that determines an apoplastic barrier between the intraorganismal apoplasm and the extraorganismal apoplasm and prevents lateral diffusion. The sequence is that of Casparian strip membrane protein 1 from Oryza sativa subsp. indica (Rice).